A 185-amino-acid polypeptide reads, in one-letter code: Flavodoxin (185 aa).

Positions 4–159 (VLVIYDTRTG…ACRRLGRRLA (156 aa)) constitute a Flavodoxin-like domain.

Belongs to the flavodoxin family. It depends on FMN as a cofactor.

Low-potential electron donor to a number of redox enzymes. In Aquifex aeolicus (strain VF5), this protein is Flavodoxin (fldA).